The chain runs to 610 residues: Glutamine--fructose-6-phosphate aminotransferase [isomerizing] (610 aa).

Residue Cys2 is the Nucleophile; for GATase activity of the active site. One can recognise a Glutamine amidotransferase type-2 domain in the interval 2–218 (CGIVGAVAQR…EGDVAEITRR (217 aa)). SIS domains lie at 286–426 (AVEI…QQNR) and 459–600 (LAPD…VDQP). The active-site For Fru-6P isomerization activity is Lys605.

In terms of assembly, homodimer.

Its subcellular location is the cytoplasm. The catalysed reaction is D-fructose 6-phosphate + L-glutamine = D-glucosamine 6-phosphate + L-glutamate. Functionally, catalyzes the first step in hexosamine metabolism, converting fructose-6P into glucosamine-6P using glutamine as a nitrogen source. The polypeptide is Glutamine--fructose-6-phosphate aminotransferase [isomerizing] (Aliivibrio fischeri (strain ATCC 700601 / ES114) (Vibrio fischeri)).